Here is a 167-residue protein sequence, read N- to C-terminus: NAD(P)H-quinone oxidoreductase subunit I, chloroplastic (167 aa).

4Fe-4S ferredoxin-type domains lie at 55-84 and 95-124; these read GRIH…VDWK and LNYS…MTEE. Residues Cys-64, Cys-67, Cys-70, Cys-74, Cys-104, Cys-107, Cys-110, and Cys-114 each contribute to the [4Fe-4S] cluster site.

It belongs to the complex I 23 kDa subunit family. As to quaternary structure, NDH is composed of at least 16 different subunits, 5 of which are encoded in the nucleus. The cofactor is [4Fe-4S] cluster.

The protein resides in the plastid. It localises to the chloroplast thylakoid membrane. It catalyses the reaction a plastoquinone + NADH + (n+1) H(+)(in) = a plastoquinol + NAD(+) + n H(+)(out). The enzyme catalyses a plastoquinone + NADPH + (n+1) H(+)(in) = a plastoquinol + NADP(+) + n H(+)(out). In terms of biological role, NDH shuttles electrons from NAD(P)H:plastoquinone, via FMN and iron-sulfur (Fe-S) centers, to quinones in the photosynthetic chain and possibly in a chloroplast respiratory chain. The immediate electron acceptor for the enzyme in this species is believed to be plastoquinone. Couples the redox reaction to proton translocation, and thus conserves the redox energy in a proton gradient. The chain is NAD(P)H-quinone oxidoreductase subunit I, chloroplastic from Eucalyptus globulus subsp. globulus (Tasmanian blue gum).